The primary structure comprises 31 residues: Photosystem II reaction center protein T (31 aa).

A helical membrane pass occupies residues 3–23; that stretch reads SFAYVLILTLAIATLFFAIAF.

Belongs to the PsbT family. PSII is composed of 1 copy each of membrane proteins PsbA, PsbB, PsbC, PsbD, PsbE, PsbF, PsbH, PsbI, PsbJ, PsbK, PsbL, PsbM, PsbT, PsbX, PsbY, PsbZ, Psb30/Ycf12, peripheral proteins PsbO, CyanoQ (PsbQ), PsbU, PsbV and a large number of cofactors. It forms dimeric complexes.

It is found in the cellular thylakoid membrane. Its function is as follows. Found at the monomer-monomer interface of the photosystem II (PS II) dimer, plays a role in assembly and dimerization of PSII. PSII is a light-driven water plastoquinone oxidoreductase, using light energy to abstract electrons from H(2)O, generating a proton gradient subsequently used for ATP formation. This is Photosystem II reaction center protein T from Parasynechococcus marenigrum (strain WH8102).